The following is a 186-amino-acid chain: Threonylcarbamoyl-AMP synthase (186 aa).

In terms of domain architecture, YrdC-like spans 6 to 186; sequence GFRLRLAANA…FDAMSGRRIR (181 aa).

Belongs to the SUA5 family. TsaC subfamily.

Its subcellular location is the cytoplasm. The catalysed reaction is L-threonine + hydrogencarbonate + ATP = L-threonylcarbamoyladenylate + diphosphate + H2O. Functionally, required for the formation of a threonylcarbamoyl group on adenosine at position 37 (t(6)A37) in tRNAs that read codons beginning with adenine. Catalyzes the conversion of L-threonine, HCO(3)(-)/CO(2) and ATP to give threonylcarbamoyl-AMP (TC-AMP) as the acyladenylate intermediate, with the release of diphosphate. The polypeptide is Threonylcarbamoyl-AMP synthase (Methylococcus capsulatus (strain ATCC 33009 / NCIMB 11132 / Bath)).